The primary structure comprises 511 residues: MLRILLSAQTSPARLSGLLLIPPVQPCCLGPSKSGDRPFGGGPVQGLQRLLEQARSPGELLRWLSQNPTKVRAHHYPVALRRLGQLLVSQPRPSPVEQATLQDLSQLIIRNCPSFDVHTIHVCLHLAVLLGFPSDGPLLCALEQERRSRLPPKPPSPHRPAIYGGQRLEVALSCPRFLQYPRQHLIRSLAEARPEELTPHVMVLLAQHLARHRLREPQLLEAIAHFLVVQEAQLNSKVVQKLVLPFGRLNYMPLEQQFMPCLERILAREAGVAPLATVNILMSLCQLQCLPFRALQFVFSPSFINHINGTPPSLIVRRYLSLLDTAVELELPGYQGPRLPQRQRVPIFPQPLITDRARCKYSHKDMVAEGLRQLLGEENYRQNLTVPPGYCTDFLLCVSSSGAVLPMRTQDPFLPYPPRSCQQDQANFNSTTQDPAQRVVLMLRERWHFCRDGRVLLGSRALRERHLGLMGYQLLPLPFEELESQRGLPQLKSYLRQKLQALGFRWGPEGG.

Residues 439-497 (VVLMLRERWHFCRDGRVLLGSRALRERHLGLMGYQLLPLPFEELESQRGLPQLKSYLRQ) enclose the RAP domain.

Belongs to the FAST protein kinase family. Interacts with TIA1; the interactions leads to TIA1 phosphorylation. Interacts with TIAR. In terms of processing, autophosphorylated on serine/threonine residues. Activated by dephosphorylation.

The protein resides in the mitochondrion matrix. The catalysed reaction is L-seryl-[Fas-activated protein] + ATP = O-phospho-L-seryl-[Fas-activated protein] + ADP + H(+). The enzyme catalyses L-threonyl-[Fas-activated protein] + ATP = O-phospho-L-threonyl-[Fas-activated protein] + ADP + H(+). It carries out the reaction L-seryl-[protein] + ATP = O-phospho-L-seryl-[protein] + ADP + H(+). It catalyses the reaction L-threonyl-[protein] + ATP = O-phospho-L-threonyl-[protein] + ADP + H(+). Its function is as follows. Phosphorylates the splicing regulator TIA1, thereby promoting the inclusion of FAS exon 6, which leads to an mRNA encoding a pro-apoptotic form of the receptor. Required for the biogenesis of some mitochondrial-encoded mRNAs, specifically stabilizes ND6 (NADH dehydrogenase complex subunit 6) mRNA, and regulates its levels. The sequence is that of Fas-activated serine/threonine kinase (Fastk) from Mus musculus (Mouse).